The primary structure comprises 189 residues: Flavin prenyltransferase UbiX (189 aa).

FMN is bound by residues 10 to 12 (GAS), serine 37, 88 to 91 (SIKT), and arginine 123. Dimethylallyl phosphate is bound by residues tyrosine 153 and arginine 169.

It belongs to the UbiX/PAD1 family.

It carries out the reaction dimethylallyl phosphate + FMNH2 = prenylated FMNH2 + phosphate. Its pathway is cofactor biosynthesis; ubiquinone biosynthesis. Its function is as follows. Flavin prenyltransferase that catalyzes the synthesis of the prenylated FMN cofactor (prenyl-FMN) for 4-hydroxy-3-polyprenylbenzoic acid decarboxylase UbiD. The prenyltransferase is metal-independent and links a dimethylallyl moiety from dimethylallyl monophosphate (DMAP) to the flavin N5 and C6 atoms of FMN. In Escherichia coli O157:H7, this protein is Flavin prenyltransferase UbiX.